The sequence spans 194 residues: Peptidyl-tRNA hydrolase (194 aa).

Tyr19 contacts tRNA. The active-site Proton acceptor is His24. Residues Phe69, Asn71, and Asn117 each contribute to the tRNA site.

This sequence belongs to the PTH family. In terms of assembly, monomer.

Its subcellular location is the cytoplasm. The enzyme catalyses an N-acyl-L-alpha-aminoacyl-tRNA + H2O = an N-acyl-L-amino acid + a tRNA + H(+). Its function is as follows. Hydrolyzes ribosome-free peptidyl-tRNAs (with 1 or more amino acids incorporated), which drop off the ribosome during protein synthesis, or as a result of ribosome stalling. Functionally, catalyzes the release of premature peptidyl moieties from peptidyl-tRNA molecules trapped in stalled 50S ribosomal subunits, and thus maintains levels of free tRNAs and 50S ribosomes. The chain is Peptidyl-tRNA hydrolase from Neorickettsia sennetsu (strain ATCC VR-367 / Miyayama) (Ehrlichia sennetsu).